The following is a 625-amino-acid chain: Threonine--tRNA ligase (625 aa).

The segment at 1-149 is editing domain; sequence MRVLLIHAKR…RNYEAKTTAR (149 aa). 2 catalytic regions span residues 197–494 and 198–494; these read NPVN…PYIP and PVNK…PYIP. Zn(2+)-binding residues include cysteine 291, histidine 342, and histidine 463.

Belongs to the class-II aminoacyl-tRNA synthetase family. In terms of assembly, homodimer. Zn(2+) is required as a cofactor.

It is found in the cytoplasm. It carries out the reaction tRNA(Thr) + L-threonine + ATP = L-threonyl-tRNA(Thr) + AMP + diphosphate + H(+). Its function is as follows. Catalyzes the attachment of threonine to tRNA(Thr) in a two-step reaction: L-threonine is first activated by ATP to form Thr-AMP and then transferred to the acceptor end of tRNA(Thr). Also edits incorrectly charged L-seryl-tRNA(Thr). The sequence is that of Threonine--tRNA ligase from Hyperthermus butylicus (strain DSM 5456 / JCM 9403 / PLM1-5).